The following is a 211-amino-acid chain: uncharacterized protein (211 aa).

Composition is skewed to low complexity over residues 1-19 (MQDPHVPSSPTISSVSSSD) and 61-74 (SPSVAISRASSSNA). 2 disordered regions span residues 1-27 (MQDPHVPSSPTISSVSSSDLDTESTGS) and 54-94 (ASSR…EPHR).

As to quaternary structure, interacts with RLK902. Expressed in inflorescences, stems, rosette leaves and weakly in roots.

This is an uncharacterized protein from Arabidopsis thaliana (Mouse-ear cress).